Consider the following 340-residue polypeptide: CaiB/baiF CoA-transferase family protein ZK892.4 (340 aa).

D154 functions as the Nucleophile in the catalytic mechanism.

This sequence belongs to the CoA-transferase III family.

This chain is CaiB/baiF CoA-transferase family protein ZK892.4, found in Caenorhabditis elegans.